Here is a 60-residue protein sequence, read N- to C-terminus: Cecropin-B type 2 (60 aa).

A signal peptide spans 1–24 (MNFSKLFALVLLIGLVLLTGQTEA). At isoleucine 58 the chain carries Isoleucine amide.

This sequence belongs to the cecropin family.

It localises to the secreted. Its function is as follows. Cecropins have lytic and antibacterial activity against several Gram-positive and Gram-negative bacteria. This chain is Cecropin-B type 2 (CECB2), found in Aedes albopictus (Asian tiger mosquito).